The chain runs to 603 residues: MNPQLLRVTNRIIERSRETRSAYLARIEQAKTSTVHRSQLACGNLAHGFAACQPEDKASLKSMLRNNIAIITSYNDMLSAHQPYEHYPEIIRKALHEANAVGQVAGGVPAMCDGVTQGQDGMELSLLSREVIAMSAAVGLSHNMFDGALFLGVCDKIVPGLTMAALSFGHLPAVFVPSGPMASGLPNKEKVRIRQLYAEGKVDRMALLESEAASYHAPGTCTFYGTANTNQMVVEFMGMQLPGSSFVHPDSPLRDALTAAAARQVTRMTGNGNEWMPIGKMIDEKVVVNGIVALLATGGSTNHTMHLVAMARAAGIQINWDDFSDLSDVVPLMARLYPNGPADINHFQAAGGVPVLVRELLKAGLLHEDVNTVAGFGLSRYTLEPWLNNGELDWREGAEKSLDSNVIASFEQPFSHHGGTKVLSGNLGRAVMKTSAVPVENQVIEAPAVVFESQHDVMPAFEAGLLDRDCVVVVRHQGPKANGMPELHKLMPPLGVLLDRCFKIALVTDGRLSGASGKVPSAIHVTPEAYDGGLLAKVRDGDIIRVNGQTGELTLLVDEAELAAREPHIPDLSASRVGTGRELFSALREKLSGAEQGATCITF.

Cys154 and Cys221 together coordinate [4Fe-4S] cluster.

It belongs to the IlvD/Edd family. [4Fe-4S] cluster is required as a cofactor.

It carries out the reaction 6-phospho-D-gluconate = 2-dehydro-3-deoxy-6-phospho-D-gluconate + H2O. It participates in carbohydrate metabolism; Entner-Doudoroff pathway. In terms of biological role, catalyzes the dehydration of 6-phospho-D-gluconate to 2-dehydro-3-deoxy-6-phospho-D-gluconate. The chain is Phosphogluconate dehydratase from Escherichia coli O157:H7.